We begin with the raw amino-acid sequence, 441 residues long: MTGSLWLSLALSLAVLAQFKVSAAPNLVCFYDSQGSQRQGLAQFSMIDIELALQFCTHLVYGYAGVNADNYEMQSINKRLDLEQRHLAQITSMKERYPHIKFLLSVGGDADTNEGNQYIKLLESGQQGHRRFIESARDLVRRYNFDGLDLALQLPRNKPRKVHGDVGSAWKSFKKFFTGDFIVDTESETHKGQVTALIKDLSAALKQNDLLLSLTVLPNVNSSWYYDAPSIAPSLDFINLGTFDFLTPQRNPEEADFSAPTYEAVGQNRLGHYNLNFQMEHWLLQRVPANKINIGIATYGRSWKMSKDSGDSGMPVVPSTQGPAPAGPQSKQEGLLNWAEICSLMPNPSNSNARGPNAPVKRVVDPTKRYGSYAFRAADENGDHGLWISYDDPDSASSKAMYARARNLGGVALFDLTQDDFRGQCTNDRFPMLRAIKYRLL.

The first 23 residues, 1 to 23 (MTGSLWLSLALSLAVLAQFKVSA), serve as a signal peptide directing secretion. The region spanning 25–441 (PNLVCFYDSQ…MLRAIKYRLL (417 aa)) is the GH18 domain. Residues Cys-29 and Cys-56 are joined by a disulfide bond. A glycan (N-linked (GlcNAc...) asparagine) is linked at Asn-221. The disordered stretch occupies residues 307-331 (KDSGDSGMPVVPSTQGPAPAGPQSK). The cysteines at positions 342 and 425 are disulfide-linked.

Belongs to the glycosyl hydrolase 18 family. IDGF subfamily. In terms of processing, glycosylated. Primarily expressed in yolk cells and fat body. In larvae, it is expressed in small and large salivary gland cells, and weakly expressed in imaginal disks. Less expressed than Idgf2 and Idgf4.

The protein resides in the secreted. Functionally, cooperates with insulin-like peptides to stimulate the proliferation, polarization and motility of imaginal disk cells. May act by stabilizing the binding of insulin-like peptides to its receptor through a simultaneous interaction with both molecules to form a multiprotein signaling complex. The sequence is that of Chitinase-like protein Idgf3 (Idgf3) from Drosophila melanogaster (Fruit fly).